The sequence spans 166 residues: MIPAYVPNSAAALFGGGTPIDLGRTFSDGRRVFGDGKTYRGFFGGVVSGVLVGLIEIWAATAFSLSALPQQTFLSVTLLATGALLGDLAKSFLKRRLGKDRGESWFLADQYDLVVGSFLLILIFDPQWLFGTITLPIAVWIVVMTPLLHRVVNIIGYYIGVKEVPW.

Helical transmembrane passes span 42–62, 73–93, 104–124, and 128–148; these read FFGG…AATA, FLSV…KSFL, SWFL…ILIF, and WLFG…TPLL.

This sequence belongs to the CDP-archaeol synthase family. It depends on Mg(2+) as a cofactor.

Its subcellular location is the cell membrane. The enzyme catalyses 2,3-bis-O-(geranylgeranyl)-sn-glycerol 1-phosphate + CTP + H(+) = CDP-2,3-bis-O-(geranylgeranyl)-sn-glycerol + diphosphate. It participates in membrane lipid metabolism; glycerophospholipid metabolism. In terms of biological role, catalyzes the formation of CDP-2,3-bis-(O-geranylgeranyl)-sn-glycerol (CDP-archaeol) from 2,3-bis-(O-geranylgeranyl)-sn-glycerol 1-phosphate (DGGGP) and CTP. This reaction is the third ether-bond-formation step in the biosynthesis of archaeal membrane lipids. The protein is CDP-archaeol synthase of Methanoculleus marisnigri (strain ATCC 35101 / DSM 1498 / JR1).